Here is a 311-residue protein sequence, read N- to C-terminus: MKKKIGLLVMAYGTPYKEEDIERYYTHIRRGRKPSPEMLEDLTERYRAIGGISPLATITLEQAKKLEKRLNEVQDEVEYHMYLGLKHIEPFIEDAVKDMHNDGIQDAIALVLAPHYSTFSVKSYVGRAQEEAEKLGNLTIHGIDSWYKEPKFIQYWVDAVKGIYNGMSDAEREKAVLIVSAHSLPEKIIAMGDPYPDQLNETADYIARGAEVANYAVGWQSAGNTPDPWIGPDVQDLTRELNEKHGYTSFVYAPVGFVAEHLEVLYDNDFECKVVTDEIGAKYYRPEMPNASDAFIDCLTDVVLKKKESVL.

Residues Tyr12, Arg29, 45–46 (RY), Ser53, and Tyr124 contribute to the Fe-coproporphyrin III site. His182 and Glu263 together coordinate Fe(2+).

It belongs to the ferrochelatase family.

It is found in the cytoplasm. It carries out the reaction Fe-coproporphyrin III + 2 H(+) = coproporphyrin III + Fe(2+). It participates in porphyrin-containing compound metabolism; protoheme biosynthesis. Functionally, involved in coproporphyrin-dependent heme b biosynthesis. Catalyzes the insertion of ferrous iron into coproporphyrin III to form Fe-coproporphyrin III. This chain is Coproporphyrin III ferrochelatase 1, found in Bacillus cereus (strain ATCC 14579 / DSM 31 / CCUG 7414 / JCM 2152 / NBRC 15305 / NCIMB 9373 / NCTC 2599 / NRRL B-3711).